The following is a 77-amino-acid chain: VpAmp2.0 (77 aa).

The first 23 residues, 1–23, serve as a signal peptide directing secretion; it reads MQLRKALLVIFVAYLLVTDEAEA. A propeptide spanning residues 49–77 is cleaved from the precursor; the sequence is RKREIEDLFDPYQKDLDLQRLDRFFSQFQ.

The protein belongs to the non-disulfide-bridged peptide (NDBP) superfamily. Medium-length antimicrobial peptide (group 3) family. As to expression, expressed by the venom gland.

The protein localises to the secreted. It localises to the target cell membrane. Functionally, antimicrobial peptide with potent activity against Gram-positive bacteria S.aureus (MIC=10 uM) and S.agalactiaea (MIC=15 uM), and Gram-negative bacteria E.coli (MIC=24 uM) and P.aeruginosa (MIC=15 uM), as well as against yeasts Candida albicans (MIC=3.1 uM) and C.glabrata (MIC=25 uM). Also elicits low hemolysis on human erythrocytes (HC(50)=167 uM). This chain is VpAmp2.0, found in Mesomexovis punctatus (Scorpion).